A 194-amino-acid chain; its full sequence is Large ribosomal subunit protein uL24c (194 aa).

Residues Met1–Met50 constitute a chloroplast transit peptide.

This sequence belongs to the universal ribosomal protein uL24 family. In terms of assembly, part of the 50S ribosomal subunit.

The protein resides in the plastid. It localises to the chloroplast. One of two assembly initiator proteins, it binds directly to the 5'-end of the 23S rRNA, where it nucleates assembly of the 50S subunit. The polypeptide is Large ribosomal subunit protein uL24c (RPL24) (Pisum sativum (Garden pea)).